The primary structure comprises 182 residues: Small ribosomal subunit protein uS4c (182 aa).

Residues 82–143 (MRLDNILFRL…KQRSKALIQN (62 aa)) enclose the S4 RNA-binding domain.

Belongs to the universal ribosomal protein uS4 family. In terms of assembly, part of the 30S ribosomal subunit. Contacts protein S5. The interaction surface between S4 and S5 is involved in control of translational fidelity.

Its subcellular location is the plastid. It is found in the chloroplast. In terms of biological role, one of the primary rRNA binding proteins, it binds directly to 16S rRNA where it nucleates assembly of the body of the 30S subunit. Its function is as follows. With S5 and S12 plays an important role in translational accuracy. In Isophysis tasmanica, this protein is Small ribosomal subunit protein uS4c (rps4).